Here is a 231-residue protein sequence, read N- to C-terminus: NADH-ubiquinone oxidoreductase chain 4 (231 aa).

The next 6 membrane-spanning stretches (helical) occupy residues 1 to 21 (PIAGSMVLAAILLKLGGYGII), 34 to 54 (MFLPFIVLALWGAILANLTCL), 63 to 85 (IAYSSVSHMGLVVAAIMIQTPWG), 89 to 111 (AMTLMIAHGFTSSALFCLANTTY), 128 to 148 (ILPMATTWWLLTNLMNIAIPP), and 156 to 176 (LLIMSALFSWCPTTIILLGLS).

It belongs to the complex I subunit 4 family.

It is found in the mitochondrion membrane. It carries out the reaction a ubiquinone + NADH + 5 H(+)(in) = a ubiquinol + NAD(+) + 4 H(+)(out). Functionally, core subunit of the mitochondrial membrane respiratory chain NADH dehydrogenase (Complex I) that is believed to belong to the minimal assembly required for catalysis. Complex I functions in the transfer of electrons from NADH to the respiratory chain. The immediate electron acceptor for the enzyme is believed to be ubiquinone. The chain is NADH-ubiquinone oxidoreductase chain 4 (MT-ND4) from Gloydius intermedius (Central Asian pit viper).